A 172-amino-acid polypeptide reads, in one-letter code: RNA silencing suppressor p19 (172 aa).

Over residues 1-20 (MERAIQGNDAREQANSERWD) the composition is skewed to basic and acidic residues. A disordered region spans residues 1 to 37 (MERAIQGNDAREQANSERWDGGSGGTTSPFKLPDESP).

The protein belongs to the tombusvirus protein p19 family. In terms of assembly, homodimer.

Viral suppressor of RNA silencing which binds specifically to silencing RNAs (siRNAs). Acts as a molecular caliper to specifically select siRNAs based on the length of the duplex region of the RNA. The polypeptide is RNA silencing suppressor p19 (Tomato bushy stunt virus (strain Ja6) (TBSV)).